We begin with the raw amino-acid sequence, 193 residues long: Fra a 1-associated protein (193 aa).

Residues 1–27 (MGWVWKDDDEQGGHVNPSAADISPRLD) are disordered.

As to quaternary structure, interacts with FRAA1E, FRAA2 and FRAA3.

This Fragaria ananassa (Strawberry) protein is Fra a 1-associated protein.